We begin with the raw amino-acid sequence, 1177 residues long: Phospholipid-transporting ATPase IF (1177 aa).

Topologically, residues 1 to 55 (MWRWIRQQLGFDPPHQSDTRTIYVANRFPQNGLYTPQKFIDNRIISSKYTVWNFV) are cytoplasmic. Residues 56–77 (PKNLFEQFRRVANFYFLIIFLV) form a helical membrane-spanning segment. Residues 78 to 82 (QLMID) lie on the Extracellular side of the membrane. A helical membrane pass occupies residues 83–104 (TPTSPVTSGLPLFFVITVTAIK). At 105–289 (QGYEDWLRHN…SAVEKSMNTF (185 aa)) the chain is on the cytoplasmic side. The chain crosses the membrane as a helical span at residues 290 to 311 (LIIYLVILISEAVISTILKYTW). Residues 312–341 (QAEEKWDEPWYNQKTEHQRNSSKILRFISD) are Extracellular-facing. A helical transmembrane segment spans residues 342-359 (FLAFLVLYNFIIPISLYV). The Cytoplasmic segment spans residues 360–876 (TVEMQKFLGS…HGHFYYIRIA (517 aa)). The 4-aspartylphosphate intermediate role is filled by aspartate 407. The ATP site is built by aspartate 407, lysine 408, threonine 409, glutamate 531, phenylalanine 572, lysine 595, arginine 626, threonine 706, glycine 707, aspartate 708, arginine 794, and lysine 800. Aspartate 407 contacts Mg(2+). Mg(2+) is bound at residue threonine 409. Aspartate 821 is a Mg(2+) binding site. Positions 824 and 825 each coordinate ATP. Aspartate 825 contacts Mg(2+). Residues 877 to 898 (TLVQYFFYKNVCFITPQFLYQF) traverse the membrane as a helical segment. Residues 899-910 (YCLFSQQTLYDS) lie on the Extracellular side of the membrane. Residues 911–930 (VYLTLYNICFTSLPILIYSL) traverse the membrane as a helical segment. Over 931–960 (LEQHVDPHVLQNKPTLYRDISKNRLLSIKT) the chain is Cytoplasmic. The helical transmembrane segment at 961–982 (FLYWTILGFSHAFIFFFGSYLL) threads the bilayer. Residues 983–997 (IGKDTSLLGNGQMFG) lie on the Extracellular side of the membrane. The helical transmembrane segment at 998-1020 (NWTFGTLVFTVMVITVTVKMALE) threads the bilayer. Topologically, residues 1021–1025 (THFWT) are cytoplasmic. A helical membrane pass occupies residues 1026 to 1047 (WINHLVTWGSIIFYFVFSLFYG). Residues 1048–1065 (GILWPFLGSQNMYFVFIQ) are Extracellular-facing. Residues 1066–1090 (LLSSGSAWFAIILMVVTCLFLDIIK) form a helical membrane-spanning segment. Topologically, residues 1091-1177 (KVFDRHLHPT…TLSTMDSSTC (87 aa)) are cytoplasmic. A Phosphoserine modification is found at serine 1154.

It belongs to the cation transport ATPase (P-type) (TC 3.A.3) family. Type IV subfamily. Component of a P4-ATPase flippase complex which consists of a catalytic alpha subunit ATP11B and an accessory beta subunit TMEM30A. Mg(2+) serves as cofactor.

It localises to the recycling endosome membrane. The protein localises to the early endosome. Its subcellular location is the endoplasmic reticulum. It is found in the golgi apparatus. The protein resides in the trans-Golgi network. The enzyme catalyses ATP + H2O + phospholipidSide 1 = ADP + phosphate + phospholipidSide 2.. The catalysed reaction is a 1,2-diacyl-sn-glycero-3-phospho-L-serine(out) + ATP + H2O = a 1,2-diacyl-sn-glycero-3-phospho-L-serine(in) + ADP + phosphate + H(+). It carries out the reaction a 1,2-diacyl-sn-glycero-3-phosphoethanolamine(out) + ATP + H2O = a 1,2-diacyl-sn-glycero-3-phosphoethanolamine(in) + ADP + phosphate + H(+). With respect to regulation, the ATPase activity is up-regulated by aminophospholipids PS and PE. In terms of biological role, catalytic component of a P4-ATPase flippase complex which catalyzes the hydrolysis of ATP coupled to the transport of aminophospholipids, phosphatidylserines (PS) and phosphatidylethanolamines (PE), from the outer to the inner leaflet of intracellular membranes. May contribute to the maintenance of membrane lipid asymmetry in endosome compartment. In Homo sapiens (Human), this protein is Phospholipid-transporting ATPase IF (ATP11B).